Here is a 186-residue protein sequence, read N- to C-terminus: Mediator of RNA polymerase II transcription subunit 10a (186 aa).

This sequence belongs to the Mediator complex subunit 10 family. Mono-, di- and oligomers. Component of the Mediator complex. Interacts with GEBPL.

Its subcellular location is the nucleus. In terms of biological role, component of the Mediator complex, a coactivator involved in the regulated transcription of nearly all RNA polymerase II-dependent genes. Mediator functions as a bridge to convey information from gene-specific regulatory proteins to the basal RNA polymerase II transcription machinery. The Mediator complex, having a compact conformation in its free form, is recruited to promoters by direct interactions with regulatory proteins and serves for the assembly of a functional pre-initiation complex with RNA polymerase II and the general transcription factors. The polypeptide is Mediator of RNA polymerase II transcription subunit 10a (Arabidopsis thaliana (Mouse-ear cress)).